The primary structure comprises 165 residues: Peptidyl-prolyl cis-trans isomerase NIMA-interacting 1 (165 aa).

The region spanning 5 to 39 (EKLPPGWEKRMSRSSGRVYYFNHITNASQWERPSG) is the WW domain. Residues 33–56 (QWERPSGGSTVGGSSKNGQGEPAK) are disordered. Lys48 is subject to N6-acetyllysine. Residues 54-165 (PAKVRCSHLL…SGIHIILRTE (112 aa)) form the PpiC domain. Phosphoserine is present on residues Ser73 and Ser110.

As to quaternary structure, interacts with STIL. Interacts with KIF20B. Interacts with NEK6. Interacts (via WW domain) with PRKX. Interacts with BTK. Interacts (via PpiC domain) with DAPK1. Interacts with the phosphorylated form of RAF1. Interacts (via WW domain) with ATCAY; upon NGF stimulation. Interacts with PML. Interacts with BCL6. Interacts with FBXW7, disrupting FBXW7 dimerization and promoting FBXW7 autoubiquitination and degradation. Directly interacts with RBBP8/CtIP; this interaction depends upon RBBP8 phosphorylation. Interacts (via WW domain) with IRAK3/IRAK-M (when phosphorylated at 'Ser-110') in response to IL33-mediated (but not TLR4 ligand LPS) dendritic cell stimulation. Interacts with PGK1 (when phosphorylated at 'Ser-203'); the interaction is direct, occurs under hypoxic conditions, and targets PGK1 to the mitochondrion by promoting interactions with the TOM complex. Post-translationally, phosphorylation at Ser-73 by DAPK1 results in inhibition of its catalytic activity, nuclear localization, and its ability to induce centrosome amplification, chromosome instability and cell transformation. Ser-73 is dephosphorylated upon IL33-stimulation of dendritic cells. In terms of tissue distribution, expressed in dendritic cells (at protein level).

It is found in the nucleus. Its subcellular location is the nucleus speckle. The protein localises to the cytoplasm. It catalyses the reaction [protein]-peptidylproline (omega=180) = [protein]-peptidylproline (omega=0). In terms of biological role, peptidyl-prolyl cis/trans isomerase (PPIase) that binds to and isomerizes specific phosphorylated Ser/Thr-Pro (pSer/Thr-Pro) motifs. By inducing conformational changes in a subset of phosphorylated proteins, acts as a molecular switch in multiple cellular processes. Displays a preference for an acidic residue N-terminal to the isomerized proline bond. Regulates mitosis presumably by interacting with NIMA and attenuating its mitosis-promoting activity. Down-regulates kinase activity of BTK. Can transactivate multiple oncogenes and induce centrosome amplification, chromosome instability and cell transformation. Required for the efficient dephosphorylation and recycling of RAF1 after mitogen activation. Binds and targets PML and BCL6 for degradation in a phosphorylation-dependent manner. Acts as a regulator of JNK cascade by binding to phosphorylated FBXW7, disrupting FBXW7 dimerization and promoting FBXW7 autoubiquitination and degradation: degradation of FBXW7 leads to subsequent stabilization of JUN. May facilitate the ubiquitination and proteasomal degradation of RBBP8/CtIP through CUL3/KLHL15 E3 ubiquitin-protein ligase complex, hence favors DNA double-strand repair through error-prone non-homologous end joining (NHEJ) over error-free, RBBP8-mediated homologous recombination (HR). Upon IL33-induced lung inflammation, catalyzes cis-trans isomerization of phosphorylated IRAK3/IRAK-M, inducing IRAK3 stabilization, nuclear translocation and expression of pro-inflammatory genes in dendritic cells. Catalyzes cis-trans isomerization of phosphorylated phosphoglycerate kinase PGK1 under hypoxic conditions to promote its binding to the TOM complex and targeting to the mitochondrion. This chain is Peptidyl-prolyl cis-trans isomerase NIMA-interacting 1 (Pin1), found in Mus musculus (Mouse).